The following is a 310-amino-acid chain: Protein FIP2 (310 aa).

Residues methionine 1–arginine 58 are disordered. Residues tyrosine 14–asparagine 25 are compositionally biased toward acidic residues. Phosphoserine occurs at positions 77 and 105. 3 disordered regions span residues alanine 115–glycine 135, phenylalanine 152–aspartate 171, and aspartate 177–serine 221. Residues proline 208–serine 221 show a composition bias toward polar residues.

In terms of assembly, interacts with FRI. Interacts with WAV3.

This Arabidopsis thaliana (Mouse-ear cress) protein is Protein FIP2.